A 149-amino-acid polypeptide reads, in one-letter code: Oligosaccharyltransferase complex subunit ostc (149 aa).

The Cytoplasmic segment spans residues 1–32; it reads MESLYRVPFTVLECPNLKLKKPSWLHMPSAMT. A helical transmembrane segment spans residues 33–53; the sequence is VYAMVVVSYFLITGGIIYDVI. Residues 54–83 are Extracellular-facing; sequence VEPPSVGSMTDEHGHQRPVAFLAYRVNGQY. The chain crosses the membrane as a helical span at residues 84–104; it reads IMEGLASSFLFTMGGLGFIIL. The Cytoplasmic segment spans residues 105-117; it reads DRSNAPNIPKLNR. Residues 118–138 form a helical membrane-spanning segment; sequence FLLLFIGFVCVLLSFFMARVF. At 139–149 the chain is on the extracellular side; that stretch reads MRMKLPGYLMG.

It belongs to the OSTC family. As to quaternary structure, specific component of the STT3A-containing form of the oligosaccharyltransferase (OST) complex.

Its subcellular location is the membrane. Its pathway is protein modification; protein glycosylation. Specific component of the STT3A-containing form of the oligosaccharyl transferase (OST) complex that catalyzes the initial transfer of a defined glycan (Glc(3)Man(9)GlcNAc(2) in eukaryotes) from the lipid carrier dolichol-pyrophosphate to an asparagine residue within an Asn-X-Ser/Thr consensus motif in nascent polypeptide chains, the first step in protein N-glycosylation. N-glycosylation occurs cotranslationally and the complex associates with the Sec61 complex at the channel-forming translocon complex that mediates protein translocation across the endoplasmic reticulum (ER). All subunits are required for a maximal enzyme activity. The chain is Oligosaccharyltransferase complex subunit ostc from Xenopus tropicalis (Western clawed frog).